Consider the following 298-residue polypeptide: Mitochondrial dicarboxylate/tricarboxylate transporter DTC (298 aa).

Solcar repeat units follow at residues 12-93 (WTTV…LTAK), 103-194 (LPLY…SAEY), and 202-292 (GEMS…ITKF). 6 helical membrane passes run 18–38 (FVNG…IDMI), 68–88 (GLSA…GSFK), 109–129 (ALCG…ADLA), 169–189 (GCGP…ASYD), 208–228 (VGAS…FDFV), and 268–288 (FPVY…FLNQ).

This sequence belongs to the mitochondrial carrier (TC 2.A.29) family. In terms of tissue distribution, highly expressed in flower buds and at lower levels in roots, leaves and stems.

It localises to the mitochondrion inner membrane. Catalyzes the transport of dicarboxylates, such as oxoglutarate, oxaloacetate, malate, and succinate, and of tricarboxylates, such as citrate, isocitrate, cis-aconitate, and trans-aconitate by a counter-exchange mechanism across the inner mitochondrial membrane. Substrate preference in reconstituted proteoliposomes is oxaloacetate &gt; malonate &gt; malate &gt; maleate &gt; succinate &gt; oxoglutarate &gt; citrate &gt; trans-aconitate &gt; cis-aconitate &gt; sulfate &gt; isocitrate. May be important for plant metabolic functions requiring organic acid flux to or from the mitochondria, such as nitrogen assimilation, export of reducing equivalents from the mitochondria, and fatty acid elongation. The sequence is that of Mitochondrial dicarboxylate/tricarboxylate transporter DTC (DTC) from Arabidopsis thaliana (Mouse-ear cress).